Reading from the N-terminus, the 403-residue chain is S-adenosylmethionine synthase (403 aa).

Residue His-15 participates in ATP binding. Residue Asp-17 participates in Mg(2+) binding. Glu-43 contributes to the K(+) binding site. Glu-56 and Gln-99 together coordinate L-methionine. Positions 99–109 (QSPDINQGVDR) are flexible loop. ATP contacts are provided by residues 166–168 (DAK), 232–233 (KF), Asp-241, 247–248 (RK), Ala-264, and Lys-268. Asp-241 contacts L-methionine. Lys-272 contributes to the L-methionine binding site.

It belongs to the AdoMet synthase family. Homotetramer; dimer of dimers. Mg(2+) serves as cofactor. Requires K(+) as cofactor.

It localises to the cytoplasm. The catalysed reaction is L-methionine + ATP + H2O = S-adenosyl-L-methionine + phosphate + diphosphate. It participates in amino-acid biosynthesis; S-adenosyl-L-methionine biosynthesis; S-adenosyl-L-methionine from L-methionine: step 1/1. Functionally, catalyzes the formation of S-adenosylmethionine (AdoMet) from methionine and ATP. The overall synthetic reaction is composed of two sequential steps, AdoMet formation and the subsequent tripolyphosphate hydrolysis which occurs prior to release of AdoMet from the enzyme. This is S-adenosylmethionine synthase from Xylella fastidiosa (strain Temecula1 / ATCC 700964).